Consider the following 373-residue polypeptide: Chaperone protein DnaJ (373 aa).

A J domain is found at 5–70 (DYYEVLGVAK…QKRAAYDRYG (66 aa)). The CR-type zinc-finger motif lies at 133 to 211 (GFDTEIRVPS…CDGVGRTRRN (79 aa)). Positions 146, 149, 163, 166, 185, 188, 199, and 202 each coordinate Zn(2+). 4 CXXCXGXG motif repeats span residues 146–153 (CDTCHGSG), 163–170 (CRTCGGSG), 185–192 (CPTCHGTG), and 199–206 (CPSCDGVG).

It belongs to the DnaJ family. As to quaternary structure, homodimer. The cofactor is Zn(2+).

It is found in the cytoplasm. Its function is as follows. Participates actively in the response to hyperosmotic and heat shock by preventing the aggregation of stress-denatured proteins and by disaggregating proteins, also in an autonomous, DnaK-independent fashion. Unfolded proteins bind initially to DnaJ; upon interaction with the DnaJ-bound protein, DnaK hydrolyzes its bound ATP, resulting in the formation of a stable complex. GrpE releases ADP from DnaK; ATP binding to DnaK triggers the release of the substrate protein, thus completing the reaction cycle. Several rounds of ATP-dependent interactions between DnaJ, DnaK and GrpE are required for fully efficient folding. Also involved, together with DnaK and GrpE, in the DNA replication of plasmids through activation of initiation proteins. The sequence is that of Chaperone protein DnaJ from Bordetella bronchiseptica (strain ATCC BAA-588 / NCTC 13252 / RB50) (Alcaligenes bronchisepticus).